A 199-amino-acid chain; its full sequence is Mediator of RNA polymerase II transcription subunit 10 (199 aa).

This sequence belongs to the Mediator complex subunit 10 family. In terms of assembly, component of the Mediator complex.

The protein localises to the nucleus. In terms of biological role, component of the Mediator complex, a coactivator involved in the regulated transcription of nearly all RNA polymerase II-dependent genes. Mediator functions as a bridge to convey information from gene-specific regulatory proteins to the basal RNA polymerase II transcription machinery. Mediator is recruited to promoters by direct interactions with regulatory proteins and serves as a scaffold for the assembly of a functional preinitiation complex with RNA polymerase II and the general transcription factors. The sequence is that of Mediator of RNA polymerase II transcription subunit 10 (NUT2) from Candida glabrata (strain ATCC 2001 / BCRC 20586 / JCM 3761 / NBRC 0622 / NRRL Y-65 / CBS 138) (Yeast).